Here is a 422-residue protein sequence, read N- to C-terminus: UDP-N-acetylglucosamine 1-carboxyvinyltransferase (422 aa).

22–23 (KN) lines the phosphoenolpyruvate pocket. A UDP-N-acetyl-alpha-D-glucosamine-binding site is contributed by R93. Residue C117 is the Proton donor of the active site. Residue C117 is modified to 2-(S-cysteinyl)pyruvic acid O-phosphothioketal. Residues 122-126 (RPVDQ), D309, and I331 each bind UDP-N-acetyl-alpha-D-glucosamine.

The protein belongs to the EPSP synthase family. MurA subfamily.

It is found in the cytoplasm. It catalyses the reaction phosphoenolpyruvate + UDP-N-acetyl-alpha-D-glucosamine = UDP-N-acetyl-3-O-(1-carboxyvinyl)-alpha-D-glucosamine + phosphate. It participates in cell wall biogenesis; peptidoglycan biosynthesis. Its function is as follows. Cell wall formation. Adds enolpyruvyl to UDP-N-acetylglucosamine. This chain is UDP-N-acetylglucosamine 1-carboxyvinyltransferase, found in Delftia acidovorans (strain DSM 14801 / SPH-1).